We begin with the raw amino-acid sequence, 51 residues long: Large ribosomal subunit protein eL39 (51 aa).

It belongs to the eukaryotic ribosomal protein eL39 family.

This is Large ribosomal subunit protein eL39 from Thermococcus gammatolerans (strain DSM 15229 / JCM 11827 / EJ3).